Consider the following 550-residue polypeptide: Arginine--tRNA ligase (550 aa).

The 'HIGH' region signature appears at 130–140 (ANPTGPIHIGG).

Belongs to the class-I aminoacyl-tRNA synthetase family. In terms of assembly, monomer.

Its subcellular location is the cytoplasm. It catalyses the reaction tRNA(Arg) + L-arginine + ATP = L-arginyl-tRNA(Arg) + AMP + diphosphate. This chain is Arginine--tRNA ligase (argS), found in Mycobacterium tuberculosis (strain CDC 1551 / Oshkosh).